Here is a 371-residue protein sequence, read N- to C-terminus: Aminomethyltransferase (371 aa).

It belongs to the GcvT family. In terms of assembly, the glycine cleavage system is composed of four proteins: P, T, L and H.

The enzyme catalyses N(6)-[(R)-S(8)-aminomethyldihydrolipoyl]-L-lysyl-[protein] + (6S)-5,6,7,8-tetrahydrofolate = N(6)-[(R)-dihydrolipoyl]-L-lysyl-[protein] + (6R)-5,10-methylene-5,6,7,8-tetrahydrofolate + NH4(+). In terms of biological role, the glycine cleavage system catalyzes the degradation of glycine. The sequence is that of Aminomethyltransferase from Pectobacterium atrosepticum (strain SCRI 1043 / ATCC BAA-672) (Erwinia carotovora subsp. atroseptica).